A 1024-amino-acid chain; its full sequence is PH and SEC7 domain-containing protein 1 (1024 aa).

4 disordered regions span residues 25–98, 113–230, 246–401, and 430–536; these read WLPE…GAQS, PLNG…EVSS, SLDP…GPDS, and ASPG…LDST. The segment covering 71 to 95 has biased composition (pro residues); the sequence is RGPPSPRVAPSPWAPSSPTGQPPPG. Phosphoserine is present on residues S126 and S156. Over residues 215-230 the composition is skewed to polar residues; the sequence is FLNQGDTWSSPREVSS. Positions 300–313 are enriched in acidic residues; the sequence is DIDEVLAEREEADS. The segment covering 327–342 has biased composition (pro residues); it reads TAYPPAPRPGPLPGPH. Residues 349–369 are compositionally biased toward acidic residues; the sequence is NEDEDDDEAGGEEDVDDEVFE. A compositionally biased stretch (pro residues) spans 445–463; sequence PPQPPAPRPDPPAPAPLAP. Residues 512-706 enclose the SEC7 domain; that stretch reads GAAPLGSEPP…KALYSSIKNE (195 aa). The residue at position 720 (S720) is a Phosphoserine. The 114-residue stretch at 756–869 folds into the PH domain; it reads AVYKHGALVR…WITRINVVAA (114 aa). The stretch at 898–924 forms a coiled coil; sequence LSQEEQVRTHEAKLKAMASELREHRAA. Residues 976–1024 form a disordered region; that stretch reads ALAQAGSTEDGLPPSHSSPSLQPKPSSQPRAQRHSSEPRPGAGSGRRKP. The span at 987–1004 shows a compositional bias: low complexity; that stretch reads LPPSHSSPSLQPKPSSQP.

It belongs to the PSD family. As to quaternary structure, interacts with ACTN1. Interacts (ARF6-bound form) with KCNK1; does not interact with KCNK1 in the absence of ARF6. In terms of tissue distribution, isoform 2 is expressed in the brain.

The protein resides in the cell membrane. The protein localises to the cell projection. It is found in the ruffle membrane. Its subcellular location is the cleavage furrow. In terms of biological role, guanine nucleotide exchange factor for ARF6. Induces cytoskeletal remodeling. In Homo sapiens (Human), this protein is PH and SEC7 domain-containing protein 1 (PSD).